The primary structure comprises 250 residues: 2,3-bisphosphoglycerate-dependent phosphoglycerate mutase (250 aa).

Substrate is bound by residues 10–17, 23–24, R62, 89–92, K100, 116–117, and 185–186; these read RHGESQWN, TG, ERHY, RR, and GN. The Tele-phosphohistidine intermediate role is filled by H11. E89 (proton donor/acceptor) is an active-site residue.

This sequence belongs to the phosphoglycerate mutase family. BPG-dependent PGAM subfamily. In terms of assembly, homodimer.

It catalyses the reaction (2R)-2-phosphoglycerate = (2R)-3-phosphoglycerate. The protein operates within carbohydrate degradation; glycolysis; pyruvate from D-glyceraldehyde 3-phosphate: step 3/5. In terms of biological role, catalyzes the interconversion of 2-phosphoglycerate and 3-phosphoglycerate. The protein is 2,3-bisphosphoglycerate-dependent phosphoglycerate mutase of Erwinia tasmaniensis (strain DSM 17950 / CFBP 7177 / CIP 109463 / NCPPB 4357 / Et1/99).